The primary structure comprises 512 residues: Respiratory nitrate reductase 1 beta chain (512 aa).

3 consecutive 4Fe-4S ferredoxin-type domains span residues 7–35, 175–206, and 208–237; these read VGMV…SREG, TFMM…KREE, and GIVL…FNWK. Residues cysteine 16, cysteine 19, cysteine 22, cysteine 26, cysteine 184, cysteine 187, and cysteine 192 each coordinate [4Fe-4S] cluster. Cysteine 196, cysteine 217, and cysteine 223 together coordinate [3Fe-4S] cluster. [4Fe-4S] cluster contacts are provided by cysteine 227, cysteine 244, cysteine 247, cysteine 259, and cysteine 263.

Dimer of heterotrimers each composed of an alpha, a beta and a gamma chain. Alpha and beta are catalytic chains; gamma chains are involved in binding the enzyme complex to the cytoplasmic membrane. [4Fe-4S] cluster serves as cofactor. The cofactor is [3Fe-4S] cluster.

It localises to the cell membrane. It catalyses the reaction nitrate + a quinol = a quinone + nitrite + H2O. In terms of biological role, the nitrate reductase enzyme complex allows E.coli to use nitrate as an electron acceptor during anaerobic growth. The beta chain is an electron transfer unit containing four cysteine clusters involved in the formation of iron-sulfur centers. Electrons are transferred from the gamma chain to the molybdenum cofactor of the alpha subunit. The polypeptide is Respiratory nitrate reductase 1 beta chain (narH) (Escherichia coli (strain K12)).